A 711-amino-acid chain; its full sequence is Quinolinate synthase, chloroplastic (711 aa).

Residues 1–41 constitute a chloroplast transit peptide; that stretch reads MDVSSLAAAAPSLVAPPLHHKPHLAFPPHHPSPARGSIGVR. The interval 17–63 is disordered; it reads PLHHKPHLAFPPHHPSPARGSIGVRCAHSPSPHPLRPSAATADEEVS. Cys114 serves as the catalytic Cysteine persulfide intermediate. His263 and Ser289 together coordinate iminosuccinate. Cys343 is a [4Fe-4S] cluster binding site. Iminosuccinate-binding positions include 372–374 and Ser394; that span reads YIN. Cys467 contacts [4Fe-4S] cluster. Iminosuccinate contacts are provided by residues 493-495 and Thr518; that span reads HFE. Residue Cys631 coordinates [4Fe-4S] cluster.

Belongs to the quinolinate synthase family. Type 1 subfamily. In terms of assembly, homodimer. [4Fe-4S] cluster serves as cofactor.

It localises to the plastid. Its subcellular location is the chloroplast. It carries out the reaction iminosuccinate + dihydroxyacetone phosphate = quinolinate + phosphate + 2 H2O + H(+). The protein operates within cofactor biosynthesis; NAD(+) biosynthesis; quinolinate from iminoaspartate: step 1/1. Catalyzes the condensation of iminoaspartate with dihydroxyacetone phosphate to form quinolinate. The protein is Quinolinate synthase, chloroplastic of Oryza sativa subsp. japonica (Rice).